The primary structure comprises 1895 residues: Probable WRKY transcription factor 19 (1895 aa).

The tract at residues 1–85 (MSEKEELPLT…SGSGLSQQLN (85 aa)) is disordered. The segment covering 10 to 22 (TLTSIGAATATSD) has biased composition (polar residues). Low complexity predominate over residues 28-39 (GSSGEGISSSSS). The segment covering 46-62 (MQNSPTGLMISQSSSMC) has biased composition (polar residues). Low complexity predominate over residues 75 to 85 (SSGSGLSQQLN). The 81-residue stretch at 291–371 (RPLTIDGGGN…LGFNTYLSKE (81 aa)) folds into the PAH domain. Polar residues predominate over residues 408–417 (ANMQPQTEYP). Disordered stretches follow at residues 408-442 (ANMQ…SSLL), 517-538 (YKDR…TYLS), and 580-620 (EASD…ADAS). Over residues 418–427 (SSSAVQSFSS) the composition is skewed to low complexity. Residues 428 to 442 (GQPQIPTSAPDSSLL) are compositionally biased toward polar residues. The segment at residues 462–526 (NVDKQVNDGY…YKDRHNHEPP (65 aa)) is a DNA-binding region (WRKY 1). The segment at residues 635–700 (SEVDNLDDGY…SLCRRGISVY (66 aa)) is a DNA-binding region (WRKY 2). A TIR domain is found at 666–808 (KDYDVVIRYG…EIVRDALKVL (143 aa)). Positions 800-1087 (IVRDALKVLC…LDGCGFSAHV (288 aa)) constitute an NB-ARC domain. ATP is bound at residue 844-851 (GTVGIGKT). 10 LRR repeats span residues 1206–1227 (KLRL…FNPE), 1228–1249 (NLVE…KKAR), 1259–1281 (KLKK…SSAT), 1282–1304 (NLEH…ISYL), 1306–1328 (KLVF…VDLE), 1329–1351 (SLEV…SPNV), 1352–1371 (KELY…IKNL), 1373–1395 (LLEK…IYKL), 1397–1419 (HLET…SRRM), and 1421–1442 (CLRF…ISYL). Residues 1562-1583 (ETVAPPSSSSEAREEEVETEET) form a disordered region. Positions 1626 to 1877 (WQKGQLLGRG…AAELLNHPFV (252 aa)) constitute a Protein kinase domain. Residues 1632-1640 (LGRGSLGSV) and Lys-1654 contribute to the ATP site. The active site involves Asp-1758.

It belongs to the disease resistance X-TIR-NB-LRR-X family.

It localises to the nucleus. Transcription factor. Interacts specifically with the W box (5'-(T)TGAC[CT]-3'), a frequently occurring elicitor-responsive cis-acting element. May act also as a disease resistance protein with a serine/threonine-protein kinase activity. The protein is Probable WRKY transcription factor 19 (WRKY19) of Arabidopsis thaliana (Mouse-ear cress).